We begin with the raw amino-acid sequence, 373 residues long: Capsular polysaccharide phosphotransferase (373 aa).

The protein belongs to the stealth family.

Part of a capsule gene locus. Expression was not detected under standard growth conditions. The sequence is that of Capsular polysaccharide phosphotransferase from Neisseria meningitidis serogroup B.